Here is a 322-residue protein sequence, read N- to C-terminus: Solute carrier family 35 member B1 (322 aa).

A run of 8 helical transmembrane segments spans residues Leu12–Gln32, Phe51–Ile71, Trp85–Leu105, Tyr136–Tyr156, Thr168–Val188, Leu210–Leu230, Ile243–Tyr263, and Val285–Leu305. The Di-lysine motif motif lies at Lys318–His322.

Belongs to the nucleotide-sugar transporter family. SLC35B subfamily.

It localises to the endoplasmic reticulum membrane. It catalyses the reaction ADP(in) + ATP(out) = ADP(out) + ATP(in). The catalysed reaction is UDP(out) + ATP(in) = UDP(in) + ATP(out). The enzyme catalyses UTP(out) + ATP(in) = UTP(in) + ATP(out). It carries out the reaction dATP(out) + ATP(in) = dATP(in) + ATP(out). In terms of biological role, ATP:ADP antiporter that catalyzes the exchange of ATP and ADP across the endoplasmic reticulum (ER) membrane. Imports ATP from the cytosol to the ER lumen and exports ADP in the opposite direction. Regulates ER energy metabolism and protein biogenesis. Appears to be part of a calcium-dependent ER to cytosol low energy response axis, where calcium efflux from ER to the cytosol triggers ATP import into the ER lumen to maintain sufficient ATP supply. Provides ATP to ER chaperone HSPA5 that drives protein folding and trafficking in the ER. Can transport dATP, UTP or UDP in exchange for ATP, but the physiological relevance of this process remains to be established. The sequence is that of Solute carrier family 35 member B1 (SLC35B1) from Bos taurus (Bovine).